A 128-amino-acid polypeptide reads, in one-letter code: Large ribosomal subunit protein bL12 (128 aa).

This sequence belongs to the bacterial ribosomal protein bL12 family. In terms of assembly, homodimer. Part of the ribosomal stalk of the 50S ribosomal subunit. Forms a multimeric L10(L12)X complex, where L10 forms an elongated spine to which 2 to 4 L12 dimers bind in a sequential fashion. Binds GTP-bound translation factors.

Functionally, forms part of the ribosomal stalk which helps the ribosome interact with GTP-bound translation factors. Is thus essential for accurate translation. The sequence is that of Large ribosomal subunit protein bL12 from Sorangium cellulosum (strain So ce56) (Polyangium cellulosum (strain So ce56)).